A 584-amino-acid chain; its full sequence is ATP synthase subunit alpha, mitochondrial (584 aa).

The N-terminal 24 residues, 1-24 (MRRFGSKFASGLASRCALACPLAS), are a transit peptide targeting the mitochondrion. Residues 207-214 (DRQTGKTS) and glutamine 464 contribute to the ATP site.

This sequence belongs to the ATPase alpha/beta chains family. As to quaternary structure, F-type ATPases have 2 components, F(1) - the catalytic core - and F(o) - the membrane proton channel. F(1) has five subunits: alpha(3), beta(3), gamma(1), delta(1), epsilon(1), plus the additional subunit P18 (Tb427.05.1710) that is not present in F(1)F(o) ATP synthase from metazoa. Subunit P18 (Tb927.5.1710) interacts with the alpha subunit with a 1:1 stoichiometry; the interaction is direct. Subunit gamma is part of the central stalk. F(o) has three main subunits: a, b and c. The trypanosomal ATPase complex contains additional subunits that are not present in the F(1)F(o) ATP synthase from metazoa.

The protein resides in the mitochondrion. It is found in the mitochondrion inner membrane. Mitochondrial membrane ATP synthase (F(1)F(o) ATP synthase) produces ATP from ADP in the presence of a proton gradient across the membrane which is generated by electron transport complexes of the respiratory chain. F-type ATPases consist of two structural domains, F(1) - containing the extramembraneous catalytic core, and F(o) - containing the membrane proton channel, linked together by a central stalk and a peripheral stalk. During catalysis, ATP synthesis in the catalytic domain of F(1) is coupled via a rotary mechanism of the central stalk subunits to proton translocation. Subunits alpha and beta form the catalytic core in F(1). Rotation of the central stalk against the surrounding alpha(3)beta(3) subunits leads to hydrolysis of ATP in three separate catalytic sites on the beta subunits. Subunit alpha does not bear the catalytic high-affinity ATP-binding sites. Contrary to the procyclic, insect form that requires F(1)F(o) ATP synthase for ATP synthesis, the bloodstream form relies on ATP hydrolysis by F(1)F(o) ATP synthase to maintain its mitochondrial membrane potential. This chain is ATP synthase subunit alpha, mitochondrial, found in Trypanosoma brucei brucei.